The sequence spans 210 residues: Keratin-associated protein 26-1 (210 aa).

This sequence belongs to the PMG family. As to quaternary structure, interacts with hair keratins. In terms of tissue distribution, localized high up in the well differentiated portion of the hair follicle cuticle (about 10-15 cell layers above the apex of the dermal papilla).

Functionally, in the hair cortex, hair keratin intermediate filaments are embedded in an interfilamentous matrix, consisting of hair keratin-associated proteins (KRTAP), which are essential for the formation of a rigid and resistant hair shaft through their extensive disulfide bond cross-linking with abundant cysteine residues of hair keratins. The matrix proteins include the high-sulfur and high-glycine-tyrosine keratins. This chain is Keratin-associated protein 26-1 (KRTAP26-1), found in Homo sapiens (Human).